Consider the following 349-residue polypeptide: Green-sensitive opsin-1 (349 aa).

Topologically, residues 1–36 are extracellular; sequence MNGTEGKNFYVPMSNRTGLVRSPFEYPQYYLAEPWQ. 2 N-linked (GlcNAc...) asparagine glycosylation sites follow: asparagine 2 and asparagine 15. Residues 37–61 form a helical membrane-spanning segment; sequence FKILALYLFFLMSMGLPINGLTLVV. Residues 62-73 are Cytoplasmic-facing; it reads TAQHKKLRQPLN. A helical transmembrane segment spans residues 74–99; it reads FILVNLAVAGTIMVCFGFTVTFYTAI. Residues 100-113 lie on the Extracellular side of the membrane; sequence NGYFVLGPTGCAVE. Cysteine 110 and cysteine 187 are oxidised to a cystine. A helical transmembrane segment spans residues 114 to 133; the sequence is GFMATLGGEVALWSLVVLAI. The Cytoplasmic portion of the chain corresponds to 134–152; it reads ERYIVVCKPMGSFKFSSSH. A helical transmembrane segment spans residues 153 to 176; the sequence is AFAGIAFTWVMALACAAPPLFGWS. Residues 177 to 202 are Extracellular-facing; sequence RYIPEGMQCSCGPDYYTLNPDYNNES. Residues 203–230 traverse the membrane as a helical segment; sequence YVIYMFVCHFILPVAVIFFTYGRLVCTV. Topologically, residues 231–252 are cytoplasmic; it reads KAAAAQQQDSASTQKAEREVTK. Residues 253-276 form a helical membrane-spanning segment; that stretch reads MVILMVFGFLIAWTPYATVAAWIF. Residues 277–284 are Extracellular-facing; it reads FNKGADFS. The chain crosses the membrane as a helical span at residues 285–309; the sequence is AKFMAIPAFFSKSSALYNPVIYVLL. Residue lysine 296 is modified to N6-(retinylidene)lysine. Topologically, residues 310–349 are cytoplasmic; the sequence is NKQFRNCMLTTIFCGKNPLGDDESSTVSTSKTEVSSVSPA. A disordered region spans residues 329–349; sequence GDDESSTVSTSKTEVSSVSPA. A compositionally biased stretch (low complexity) spans 334 to 349; that stretch reads STVSTSKTEVSSVSPA.

It belongs to the G-protein coupled receptor 1 family. Opsin subfamily. Phosphorylated on some or all of the serine and threonine residues present in the C-terminal region. The color pigments are found in the cone photoreceptor cells.

Its subcellular location is the membrane. Visual pigments are the light-absorbing molecules that mediate vision. They consist of an apoprotein, opsin, covalently linked to cis-retinal. In Carassius auratus (Goldfish), this protein is Green-sensitive opsin-1.